The sequence spans 814 residues: Pre-rRNA-processing protein TSR1 homolog (814 aa).

The tract at residues methionine 1–lysine 67 is disordered. Residues asparagine 16–lysine 27 show a composition bias toward basic residues. A Bms1-type G domain is found at alanine 84–arginine 249. Disordered stretches follow at residues proline 316–glutamine 357 and tryptophan 392–glutamine 448. Positions tyrosine 317–lysine 340 are enriched in basic and acidic residues. A compositionally biased stretch (acidic residues) spans aspartate 395–methionine 426. Basic and acidic residues predominate over residues lysine 431–serine 442. Threonine 444 carries the phosphothreonine modification.

Belongs to the TRAFAC class translation factor GTPase superfamily. Bms1-like GTPase family. TSR1 subfamily.

It is found in the nucleus. The protein localises to the nucleolus. Its function is as follows. Required during maturation of the 40S ribosomal subunit in the nucleolus. The polypeptide is Pre-rRNA-processing protein TSR1 homolog (Drosophila melanogaster (Fruit fly)).